A 437-amino-acid polypeptide reads, in one-letter code: uncharacterized protein (437 aa).

The chain crosses the membrane as a helical span at residues 47–67 (LLIILIGFILLSSISAIQIDA).

It localises to the membrane. This is an uncharacterized protein from Methanocaldococcus jannaschii (strain ATCC 43067 / DSM 2661 / JAL-1 / JCM 10045 / NBRC 100440) (Methanococcus jannaschii).